The primary structure comprises 404 residues: Argininosuccinate synthase (404 aa).

ATP contacts are provided by residues Ala-12–Ser-20 and Ala-39. L-citrulline-binding residues include Tyr-90 and Ser-95. Residue Gly-120 coordinates ATP. Residues Thr-122, Asn-126, and Asp-127 each contribute to the L-aspartate site. Asn-126 serves as a coordination point for L-citrulline. Arg-130, Ser-181, Ser-190, Glu-266, and Tyr-278 together coordinate L-citrulline.

This sequence belongs to the argininosuccinate synthase family. Type 1 subfamily. In terms of assembly, homotetramer.

The protein resides in the cytoplasm. It carries out the reaction L-citrulline + L-aspartate + ATP = 2-(N(omega)-L-arginino)succinate + AMP + diphosphate + H(+). Its pathway is amino-acid biosynthesis; L-arginine biosynthesis; L-arginine from L-ornithine and carbamoyl phosphate: step 2/3. In Rhodospirillum rubrum (strain ATCC 11170 / ATH 1.1.1 / DSM 467 / LMG 4362 / NCIMB 8255 / S1), this protein is Argininosuccinate synthase.